The sequence spans 245 residues: 1-(5-phosphoribosyl)-5-[(5-phosphoribosylamino)methylideneamino] imidazole-4-carboxamide isomerase (245 aa).

Asp-7 acts as the Proton acceptor in catalysis. The Proton donor role is filled by Asp-129.

This sequence belongs to the HisA/HisF family.

The protein resides in the cytoplasm. It catalyses the reaction 1-(5-phospho-beta-D-ribosyl)-5-[(5-phospho-beta-D-ribosylamino)methylideneamino]imidazole-4-carboxamide = 5-[(5-phospho-1-deoxy-D-ribulos-1-ylimino)methylamino]-1-(5-phospho-beta-D-ribosyl)imidazole-4-carboxamide. It functions in the pathway amino-acid biosynthesis; L-histidine biosynthesis; L-histidine from 5-phospho-alpha-D-ribose 1-diphosphate: step 4/9. This Shewanella putrefaciens (strain CN-32 / ATCC BAA-453) protein is 1-(5-phosphoribosyl)-5-[(5-phosphoribosylamino)methylideneamino] imidazole-4-carboxamide isomerase.